We begin with the raw amino-acid sequence, 210 residues long: Somatotropin (210 aa).

The N-terminal stretch at 1–22 (MGQVFLLMPVLLVSCFLSQGAA) is a signal peptide. His-38 is a binding site for Zn(2+). Cys-71 and Cys-183 are joined by a disulfide. Zn(2+) is bound at residue Glu-192. Residues Cys-200 and Cys-208 are joined by a disulfide bond.

This sequence belongs to the somatotropin/prolactin family.

It localises to the secreted. Its function is as follows. Growth hormone plays an important role in growth control and is involved in the regulation of several anabolic processes. Implicated as an osmoregulatory substance important for seawater adaptation. The chain is Somatotropin (gh) from Oncorhynchus tshawytscha (Chinook salmon).